The chain runs to 903 residues: HTH-type transcriptional regulator MalT (903 aa).

Position 39–46 (39–46) interacts with ATP; the sequence is CPAGYGKT. Residues 832-897 form the HTH luxR-type domain; the sequence is ELIRTSPLTQ…DAVQQAQRLL (66 aa). Residues 856–875 constitute a DNA-binding region (H-T-H motif); sequence NDQIAGELEVAATTIKTHIR.

This sequence belongs to the MalT family. Monomer in solution. Oligomerizes to an active state in the presence of the positive effectors ATP and maltotriose.

With respect to regulation, activated by ATP and maltotriose, which are both required for DNA binding. Positively regulates the transcription of the maltose regulon whose gene products are responsible for uptake and catabolism of malto-oligosaccharides. Specifically binds to the promoter region of its target genes, recognizing a short DNA motif called the MalT box. The protein is HTH-type transcriptional regulator MalT of Yersinia enterocolitica serotype O:8 / biotype 1B (strain NCTC 13174 / 8081).